Consider the following 426-residue polypeptide: Histidine--tRNA ligase (426 aa).

It belongs to the class-II aminoacyl-tRNA synthetase family. In terms of assembly, homodimer.

The protein localises to the cytoplasm. It carries out the reaction tRNA(His) + L-histidine + ATP = L-histidyl-tRNA(His) + AMP + diphosphate + H(+). This is Histidine--tRNA ligase from Legionella pneumophila (strain Paris).